The sequence spans 554 residues: Phenylalanine--tRNA ligase beta subunit (554 aa).

One can recognise a B5 domain in the interval 274–351; the sequence is LTPDSAEITI…INYGYENFNG (78 aa). Mg(2+)-binding residues include Asp329, Asp335, and Asp339.

It belongs to the phenylalanyl-tRNA synthetase beta subunit family. Type 2 subfamily. Tetramer of two alpha and two beta subunits. Requires Mg(2+) as cofactor.

The protein resides in the cytoplasm. The catalysed reaction is tRNA(Phe) + L-phenylalanine + ATP = L-phenylalanyl-tRNA(Phe) + AMP + diphosphate + H(+). In Methanococcus aeolicus (strain ATCC BAA-1280 / DSM 17508 / OCM 812 / Nankai-3), this protein is Phenylalanine--tRNA ligase beta subunit.